The chain runs to 287 residues: Uroporphyrinogen-III C-methyltransferase (287 aa).

Positions 1–10 are enriched in polar residues; that stretch reads MAGKTVTNGA. A disordered region spans residues 1–24; it reads MAGKTVTNGAAQGKAARSGADGAV. S-adenosyl-L-methionine is bound by residues proline 40, 116–118, threonine 146, and methionine 199; that span reads GGD.

This sequence belongs to the precorrin methyltransferase family.

It carries out the reaction uroporphyrinogen III + 2 S-adenosyl-L-methionine = precorrin-2 + 2 S-adenosyl-L-homocysteine + H(+). It participates in porphyrin-containing compound metabolism; siroheme biosynthesis; precorrin-2 from uroporphyrinogen III: step 1/1. In terms of biological role, catalyzes the methylation of both C-2 and C-7 of uroporphyrinogen III leading to precorrin-1 and precorrin-2; their oxidative esterification gives respectively factor I octamethyl ester and sirohydrochlorin. Inactivation of uroporphyrinogen-III methyltransferase results in the loss of nitrite and nitric oxide reductase activities, but not of nitrous oxide reductase activity. Likely involved in heme D1 biosynthesis. The polypeptide is Uroporphyrinogen-III C-methyltransferase (nirE) (Paracoccus denitrificans (strain Pd 1222)).